The primary structure comprises 164 residues: Protein SprT (164 aa).

The 144-residue stretch at 13 to 156 (YQQAEAFFKR…LCRRCREPLV (144 aa)) folds into the SprT-like domain. Zn(2+) is bound at residue His69. Residue Glu70 is part of the active site. His73 contacts Zn(2+).

The protein belongs to the SprT family. Zn(2+) serves as cofactor.

The protein localises to the cytoplasm. The protein is Protein SprT of Pseudomonas syringae pv. syringae (strain B728a).